The sequence spans 364 residues: MGCPVSRGGSPGCGRRIAEELRFFVVDREASMCGDSCNGGGDRQQRQELAAAARASLLCLGGVMQQHITAAKARAELRKELDAIDAEWRPVIARESLRKELKAIDAQWQHAITFLRISRAIVVSIELSKELKAIDAGWEPVIIHEAQKKKREREERVAQVRRELRAELRAIDAEWRLVIARESLRKELDAIDAECRHTIKLRSALRAIEGRMELSKELKAIDAEWRPAIRLESAYRAIIGSIELSKELKAIDAETQHAVELRRALRTIEGRIELSRELKAIDAEWAPRIAQAELAAAADALKRAADKLQALGKMDTTSTPGTDLIGVVTTAIATLAAAGMQPAPSTALTGVAAEVATPSTALGV.

Coiled coils occupy residues 142-196 and 288-313; these read IIHE…AECR and RIAQ…ALGK.

The protein resides in the secreted. Functionally, associates with actin filament appendages that are formed in the inclusion appendages of the parasitophorous vacuole during infection of the host erythrocyte. The sequence is that of Appendage-associated protein from Anaplasma marginale (strain Illinois).